The chain runs to 954 residues: Translation initiation factor IF-2 (954 aa).

Low complexity predominate over residues 56–75 (KAAAPAAPKAPAPAAESRPA). The disordered stretch occupies residues 56–355 (KAAAPAAPKA…GVSVPRGDGN (300 aa)). Residues 76–87 (APAPGPAAPKAP) are compositionally biased toward pro residues. Composition is skewed to low complexity over residues 88 to 125 (APKVEAPAPAAPAASAPAAPQASSAAPAAPSTGAKPGA) and 138 to 151 (PRQGGSSQGSSAPR). Residues 241 to 254 (PGAPRPGGPRPTPG) show a composition bias toward pro residues. Over residues 269–322 (GRPGGGGRGPGRPGAPGTGGPGGGGGAPAGGGFGKGGRGRGGTQGAFGKGGAGR) the composition is skewed to gly residues. Positions 323-332 (GKQRKSKRAK) are enriched in basic residues. In terms of domain architecture, tr-type G spans 447–618 (PRAPVVTVMG…AVLLTADAAL (172 aa)). Residues 456-463 (GHVDHGKT) form a G1 region. GTP is bound at residue 456-463 (GHVDHGKT). The interval 481–485 (GITQH) is G2. A G3 region spans residues 506–509 (DTPG). GTP-binding positions include 506–510 (DTPGH) and 560–563 (NKID). Residues 560–563 (NKID) form a G4 region. Residues 596–598 (SAR) are G5.

Belongs to the TRAFAC class translation factor GTPase superfamily. Classic translation factor GTPase family. IF-2 subfamily.

It localises to the cytoplasm. One of the essential components for the initiation of protein synthesis. Protects formylmethionyl-tRNA from spontaneous hydrolysis and promotes its binding to the 30S ribosomal subunits. Also involved in the hydrolysis of GTP during the formation of the 70S ribosomal complex. In Pseudarthrobacter chlorophenolicus (strain ATCC 700700 / DSM 12829 / CIP 107037 / JCM 12360 / KCTC 9906 / NCIMB 13794 / A6) (Arthrobacter chlorophenolicus), this protein is Translation initiation factor IF-2.